A 196-amino-acid chain; its full sequence is Gastrula zinc finger protein XlCGF64.1 (196 aa).

C2H2-type zinc fingers lie at residues 6 to 28, 34 to 56, 62 to 84, 90 to 112, 118 to 140, 146 to 168, and 174 to 196; these read YECPECGKTFKYKNSLTIHQRGH, FMCTQCGKCFRQKKALRRHQFIH, YVCTECEKRFLEKSQLILHQRGH, FTCTECGESFRHKQVLMRHQFIH, YECTQCGEGFLLKSKLIHHQRGH, FMCTECGKGFRQKQVLIEHQFIH, and LMCTDCGKHFRQKHVLRLHKLSH.

The protein belongs to the krueppel C2H2-type zinc-finger protein family.

Its subcellular location is the nucleus. In terms of biological role, may be involved in transcriptional regulation. The sequence is that of Gastrula zinc finger protein XlCGF64.1 from Xenopus laevis (African clawed frog).